Consider the following 1124-residue polypeptide: EGF and laminin G domain-containing protein (1124 aa).

Residues 1–1055 (RTFVKKYSAS…KLQAEDDDKT (1055 aa)) are Extracellular-facing. 2 Laminin G-like domains span residues 8 to 203 (SASR…NQKC) and 210 to 369 (PFTF…WSGC). Disulfide bonds link Cys167/Cys203, Cys342/Cys369, Cys375/Cys386, Cys380/Cys395, Cys397/Cys412, Cys761/Cys788, Cys792/Cys803, Cys797/Cys812, and Cys814/Cys824. Residues 371–413 (ITDFCIFSPCLHGGECTQTGKTFSCGCSGTGYDKGPNSLSVCQ) enclose the EGF-like 1 domain. The region spanning 621-788 (NTATFVNEDG…GEAVFVKSGC (168 aa)) is the Laminin G-like 3 domain. In terms of domain architecture, EGF-like 2 spans 789–825 (GAACENNSCKNHAKCLDNYNVYFCDCSKTPYYGYFCH). The segment at 1011 to 1047 (RATCGPEPKVPEIPTPRPVGQRADVSTPQGITTNPKL) is disordered. A compositionally biased stretch (polar residues) spans 1034–1046 (DVSTPQGITTNPK). A helical membrane pass occupies residues 1056 to 1076 (AIIVVVVLILVLLLVVLILVI). Residues 1077–1124 (YWYWARHKGEYHTHEDDEELKATDPYIEPAAPRKLKGEEPEKKKEWYI) are Cytoplasmic-facing. A disordered region spans residues 1090–1124 (HEDDEELKATDPYIEPAAPRKLKGEEPEKKKEWYI). Basic and acidic residues predominate over residues 1111-1124 (LKGEEPEKKKEWYI).

As to expression, component of the acid-insoluble organic matrix of the aragonitic skeleton (at protein level).

It localises to the membrane. The sequence is that of EGF and laminin G domain-containing protein from Acropora millepora (Staghorn coral).